A 207-amino-acid polypeptide reads, in one-letter code: Ribosomal RNA small subunit methyltransferase G (207 aa).

S-adenosyl-L-methionine is bound by residues glycine 76, glutamine 81, 127–128 (VE), and arginine 141.

This sequence belongs to the methyltransferase superfamily. RNA methyltransferase RsmG family.

The protein resides in the cytoplasm. The enzyme catalyses guanosine(527) in 16S rRNA + S-adenosyl-L-methionine = N(7)-methylguanosine(527) in 16S rRNA + S-adenosyl-L-homocysteine. Specifically methylates the N7 position of guanine in position 527 of 16S rRNA. The protein is Ribosomal RNA small subunit methyltransferase G of Neisseria meningitidis serogroup C / serotype 2a (strain ATCC 700532 / DSM 15464 / FAM18).